A 541-amino-acid polypeptide reads, in one-letter code: Chaperonin GroEL (541 aa).

Residues threonine 29–proline 32, aspartate 86–threonine 90, glycine 413, aspartate 478–leucine 480, and aspartate 494 each bind ATP.

This sequence belongs to the chaperonin (HSP60) family. In terms of assembly, forms a cylinder of 14 subunits composed of two heptameric rings stacked back-to-back. Interacts with the co-chaperonin GroES.

The protein resides in the cytoplasm. It catalyses the reaction ATP + H2O + a folded polypeptide = ADP + phosphate + an unfolded polypeptide.. Its function is as follows. Together with its co-chaperonin GroES, plays an essential role in assisting protein folding. The GroEL-GroES system forms a nano-cage that allows encapsulation of the non-native substrate proteins and provides a physical environment optimized to promote and accelerate protein folding. The sequence is that of Chaperonin GroEL from Alkaliphilus oremlandii (strain OhILAs) (Clostridium oremlandii (strain OhILAs)).